A 612-amino-acid chain; its full sequence is uncharacterized protein (612 aa).

The tract at residues 171-217 (MLPPSLVQRNNATTSPTTDSASENNESVPSLTSSVSTSSSVYSSWNP) is disordered. Polar residues predominate over residues 177–196 (VQRNNATTSPTTDSASENNE). A compositionally biased stretch (low complexity) spans 197–214 (SVPSLTSSVSTSSSVYSS).

This sequence to yeast YNL018c.

This is an uncharacterized protein from Saccharomyces cerevisiae (strain ATCC 204508 / S288c) (Baker's yeast).